The primary structure comprises 361 residues: tRNA N6-adenosine threonylcarbamoyltransferase (361 aa).

Fe cation is bound by residues histidine 110 and histidine 114. Substrate-binding positions include 132 to 136 (LVSGG), aspartate 165, glycine 178, aspartate 182, and asparagine 289. Residue aspartate 317 coordinates Fe cation.

Belongs to the KAE1 / TsaD family. Requires Fe(2+) as cofactor.

It is found in the cytoplasm. The enzyme catalyses L-threonylcarbamoyladenylate + adenosine(37) in tRNA = N(6)-L-threonylcarbamoyladenosine(37) in tRNA + AMP + H(+). In terms of biological role, required for the formation of a threonylcarbamoyl group on adenosine at position 37 (t(6)A37) in tRNAs that read codons beginning with adenine. Is involved in the transfer of the threonylcarbamoyl moiety of threonylcarbamoyl-AMP (TC-AMP) to the N6 group of A37, together with TsaE and TsaB. TsaD likely plays a direct catalytic role in this reaction. This Nitratidesulfovibrio vulgaris (strain ATCC 29579 / DSM 644 / CCUG 34227 / NCIMB 8303 / VKM B-1760 / Hildenborough) (Desulfovibrio vulgaris) protein is tRNA N6-adenosine threonylcarbamoyltransferase.